Consider the following 200-residue polypeptide: NAD(P)H dehydrogenase (quinone) (200 aa).

A Flavodoxin-like domain is found at 4–191 (VLVLYYSSYG…DIARYQGKHV (188 aa)). Residues 10–15 (SSYGHV) and 79–81 (TRF) each bind FMN. Y12 serves as a coordination point for NAD(+). A substrate-binding site is contributed by W99. FMN is bound by residues 114 to 120 (STGTQHG) and H135.

This sequence belongs to the WrbA family. Requires FMN as cofactor.

It catalyses the reaction a quinone + NADH + H(+) = a quinol + NAD(+). The enzyme catalyses a quinone + NADPH + H(+) = a quinol + NADP(+). This Burkholderia vietnamiensis (strain G4 / LMG 22486) (Burkholderia cepacia (strain R1808)) protein is NAD(P)H dehydrogenase (quinone).